The primary structure comprises 117 residues: Large ribosomal subunit protein bL20 (117 aa).

It belongs to the bacterial ribosomal protein bL20 family.

In terms of biological role, binds directly to 23S ribosomal RNA and is necessary for the in vitro assembly process of the 50S ribosomal subunit. It is not involved in the protein synthesizing functions of that subunit. In Synechocystis sp. (strain ATCC 27184 / PCC 6803 / Kazusa), this protein is Large ribosomal subunit protein bL20 (rplT).